The following is a 495-amino-acid chain: UDP-N-acetylmuramoyl-L-alanyl-D-glutamate--2,6-diaminopimelate ligase (495 aa).

Residues Leu-27, Ser-29, and 44–46 contribute to the UDP-N-acetyl-alpha-D-muramoyl-L-alanyl-D-glutamate site; that span reads HQA. Position 116 to 122 (116 to 122) interacts with ATP; the sequence is GTNGKTT. Residues Asn-157, 158–159, Ser-185, Gln-191, and Arg-193 each bind UDP-N-acetyl-alpha-D-muramoyl-L-alanyl-D-glutamate; that span reads TT. Lys-225 carries the post-translational modification N6-carboxylysine. Meso-2,6-diaminopimelate contacts are provided by residues Arg-390, 414 to 417, Gly-465, and Glu-469; that span reads DNPR. Positions 414–417 match the Meso-diaminopimelate recognition motif motif; it reads DNPR.

Belongs to the MurCDEF family. MurE subfamily. Mg(2+) is required as a cofactor. Post-translationally, carboxylation is probably crucial for Mg(2+) binding and, consequently, for the gamma-phosphate positioning of ATP.

It localises to the cytoplasm. The catalysed reaction is UDP-N-acetyl-alpha-D-muramoyl-L-alanyl-D-glutamate + meso-2,6-diaminopimelate + ATP = UDP-N-acetyl-alpha-D-muramoyl-L-alanyl-gamma-D-glutamyl-meso-2,6-diaminopimelate + ADP + phosphate + H(+). The protein operates within cell wall biogenesis; peptidoglycan biosynthesis. Catalyzes the addition of meso-diaminopimelic acid to the nucleotide precursor UDP-N-acetylmuramoyl-L-alanyl-D-glutamate (UMAG) in the biosynthesis of bacterial cell-wall peptidoglycan. This is UDP-N-acetylmuramoyl-L-alanyl-D-glutamate--2,6-diaminopimelate ligase from Escherichia coli O6:H1 (strain CFT073 / ATCC 700928 / UPEC).